Consider the following 30-residue polypeptide: Photosystem I reaction center subunit XII (30 aa).

A helical transmembrane segment spans residues 7 to 29 (VYIALMAALLASVLAIRLGATLY).

Belongs to the PsaM family.

The protein localises to the plastid. The protein resides in the chloroplast thylakoid membrane. This chain is Photosystem I reaction center subunit XII, found in Thalassiosira pseudonana (Marine diatom).